A 394-amino-acid chain; its full sequence is Elongation factor Tu 2 (394 aa).

In terms of domain architecture, tr-type G spans 10 to 204 (KPHVNVGTIG…ALDTYIPEPE (195 aa)). Positions 19–26 (GHVDHGKT) are G1. 19 to 26 (GHVDHGKT) serves as a coordination point for GTP. Thr26 provides a ligand contact to Mg(2+). Positions 60–64 (GITIS) are G2. The G3 stretch occupies residues 81–84 (DCPG). GTP-binding positions include 81–85 (DCPGH) and 136–139 (NKCD). The tract at residues 136 to 139 (NKCD) is G4. Residues 174 to 176 (SAL) form a G5 region.

The protein belongs to the TRAFAC class translation factor GTPase superfamily. Classic translation factor GTPase family. EF-Tu/EF-1A subfamily. As to quaternary structure, monomer.

Its subcellular location is the cytoplasm. It catalyses the reaction GTP + H2O = GDP + phosphate + H(+). In terms of biological role, GTP hydrolase that promotes the GTP-dependent binding of aminoacyl-tRNA to the A-site of ribosomes during protein biosynthesis. The protein is Elongation factor Tu 2 of Vibrio vulnificus (strain CMCP6).